A 178-amino-acid chain; its full sequence is Ribosome maturation factor RimM (178 aa).

One can recognise a PRC barrel domain in the interval 101–178 (TDEYYWYQLV…VMRVEWDADF (78 aa)).

This sequence belongs to the RimM family. Binds ribosomal protein uS19.

It is found in the cytoplasm. An accessory protein needed during the final step in the assembly of 30S ribosomal subunit, possibly for assembly of the head region. Essential for efficient processing of 16S rRNA. May be needed both before and after RbfA during the maturation of 16S rRNA. It has affinity for free ribosomal 30S subunits but not for 70S ribosomes. In Pseudomonas entomophila (strain L48), this protein is Ribosome maturation factor RimM.